Here is a 1073-residue protein sequence, read N- to C-terminus: MGFLLLWFCVLFLLVSRLRAVSFPEDDEPLNTVDYHYSRQYPVFRGRPSGNESQHRLDFQLMLKIRDTLYIAGRDQVYTVNLNEIPQTEVIPSKKLTWRSRQQDRENCAMKGKHKDECHNFIKVFVPRNDEMVFVCGTNAFNPMCRYYRLRTLEYDGEEISGLARCPFDARQTNVALFADGKLYSATVADFLASDAVIYRSMGDGSALRTIKYDSKWIKEPHFLHAIEYGNYVYFFFREIAVEHNNLGKAVYSRVARICKNDMGGSQRVLEKHWTSFLKARLNCSVPGDSFFYFDVLQSITDIIQINGIPTVVGVFTTQLNSIPGSAVCAFSMDDIEKVFKGRFKEQKTPDSVWTAVPEDKVPKPRPGCCAKHGLAEAYKTSIDFPDDTLAFIKSHPLMDSAVPPIADEPWFTKTRVRYRLTAIEVDRSAGPYQNYTVIFVGSEAGVVLKVLAKTSPFSLNDSVLLEEIEAYNPAKCSAESEEDRKVVSLQLDKDHHALYVAFSSCVVRIPLSRCERYGSCKKSCIASRDPYCGWLSQGVCERVTLGMLPGGYEQDTEYGNTAHLGDCHESLPPSTTPDYKIFGGPTSDMEVSSSSVTTVASSPEITSKVIDTWRPKLTSSRKFVVQDDPNTSDFTDTISGIPKGVRWEVQSGESNQMVHMNVLITCVFAAFVLGAFIAGVAVYCYRDMFVRKNRKIHKDAESAQSCTDSSGSFAKLNGLFDSPVKEYQQNIDSPKLYSNLLTSRKELPPNTDTKSMAVDHRGQPPELAALPTPESTPVLHQKTLQAMKSHSEKAHSHGASRKEHPQFFPSSPPPHSPLSHGHIPSAIVLPNATHDYNTSFSNSNAHKAEKKLQSMDHPLTKSSSKREHRRSVDSRNTLNDLLKHLNDPNSNPKAILGEIHMAHQTLMLDPVGPMAEVPPKVPNREASLYSPPSTLPRNSPTKRVDVPTTPGVPMTSLERQRGYHKNSSQRHSISAVPKNLNSPNGVLLSRQPSMNRGGYMPTPTGAKVDYIQGTPVSVHLQPSLSRQSSYTSNGTLPRTGLKRTPSLKPDVPPKPSFVPQTTSVRPLNKYTY.

Positions 1 to 20 are cleaved as a signal peptide; that stretch reads MGFLLLWFCVLFLLVSRLRA. The Extracellular segment spans residues 21–662; it reads VSFPEDDEPL…GESNQMVHMN (642 aa). The 486-residue stretch at 27 to 512 folds into the Sema domain; that stretch reads DEPLNTVDYH…FSSCVVRIPL (486 aa). N-linked (GlcNAc...) asparagine glycosylation occurs at N51. Intrachain disulfides connect C108–C118, C136–C145, C259–C370, and C284–C329. N283 carries an N-linked (GlcNAc...) asparagine glycan. 2 N-linked (GlcNAc...) asparagine glycosylation sites follow: N435 and N461. 4 disulfide bridges follow: C477-C506, C515-C533, C521-C568, and C525-C541. The PSI domain occupies 514–569; sequence RCERYGSCKKSCIASRDPYCGWLSQGVCERVTLGMLPGGYEQDTEYGNTAHLGDCH. The N-linked (GlcNAc...) asparagine glycan is linked to N631. The helical transmembrane segment at 663 to 683 threads the bilayer; the sequence is VLITCVFAAFVLGAFIAGVAV. The Cytoplasmic portion of the chain corresponds to 684-1073; that stretch reads YCYRDMFVRK…SVRPLNKYTY (390 aa). A phosphoserine mark is found at S723, S734, and S744. Disordered regions lie at residues 745 to 825, 839 to 876, 919 to 986, and 1021 to 1073; these read RKEL…GHIP, TSFSNSNAHKAEKKLQSMDHPLTKSSSKREHRRSVDSR, PPKV…SPNG, and LQPS…KYTY. Residue T773 is modified to Phosphothreonine. Positions 790 to 806 are enriched in basic and acidic residues; it reads SHSEKAHSHGASRKEHP. 3 positions are modified to phosphoserine: S931, S957, and S983. Polar residues predominate over residues 931–942; the sequence is SPPSTLPRNSPT. Composition is skewed to polar residues over residues 1021 to 1037 and 1059 to 1073; these read LQPSLSRQSSYTSNGTL and VPQTTSVRPLNKYTY.

Belongs to the semaphorin family. Expressed in brain and lung.

Its subcellular location is the cell membrane. In terms of biological role, shows growth cone collapsing activity on dorsal root ganglion (DRG) neurons in vitro. May be a stop signal for the DRG neurons in their target areas, and possibly also for other neurons. May also be involved in the maintenance and remodeling of neuronal connections. Ligand of TREM2 with PLXNA1 as coreceptor in dendritic cells, plays a role in the generation of immune responses and skeletal homeostasis. The chain is Semaphorin-6D (Sema6d) from Mus musculus (Mouse).